Reading from the N-terminus, the 696-residue chain is Elongation factor G (696 aa).

One can recognise a tr-type G domain in the interval 8 to 290 (ERYRNIGVMA…AVLDYLPSPA (283 aa)). GTP is bound by residues 17-24 (AHIDAGKT), 88-92 (DTPGH), and 142-145 (NKMD).

The protein belongs to the TRAFAC class translation factor GTPase superfamily. Classic translation factor GTPase family. EF-G/EF-2 subfamily.

Its subcellular location is the cytoplasm. Catalyzes the GTP-dependent ribosomal translocation step during translation elongation. During this step, the ribosome changes from the pre-translocational (PRE) to the post-translocational (POST) state as the newly formed A-site-bound peptidyl-tRNA and P-site-bound deacylated tRNA move to the P and E sites, respectively. Catalyzes the coordinated movement of the two tRNA molecules, the mRNA and conformational changes in the ribosome. This chain is Elongation factor G, found in Nitrosospira multiformis (strain ATCC 25196 / NCIMB 11849 / C 71).